We begin with the raw amino-acid sequence, 235 residues long: Glial cell line-derived neurotrophic factor (235 aa).

The N-terminal stretch at 1–19 (MKLWDILATCLLLLSSVST) is a signal peptide. Positions 20-87 (RPLFHKLQPS…DFIEATLGRL (68 aa)) are excised as a propeptide. 2 disordered regions span residues 34–60 (VRSE…ASME) and 91–137 (SDVE…RVKG). A compositionally biased stretch (basic residues) spans 119–128 (GERKRSRGRA). Disulfide bonds link C142/C203, C169/C232, and C173/C234. Residues N150 and N186 are each glycosylated (N-linked (GlcNAc...) asparagine).

It belongs to the TGF-beta family. GDNF subfamily. Homodimer; disulfide-linked. Interacts with GFRA1 coreceptor and RET: forms a 2:2:2 ternary complex composed of GDNF ligand, GFRA1 and RET receptor. As to expression, first expressed at 14 hours post-fertilization (hpf) in the ventral half of anterior somites and in intermediate mesoderm. Ventral somitic expression persists and extends more posteriorly over the next 12 hours. Expressed throughout the ventral trunk mesoderm and endoderm at 24 hpf. By 30 hpf, somitic expression ceases and by 36 hpf, expression becomes restricted to the endodermal cells forming the gut, with expression along the whole length of the developing gut tube at 72 hpf.

The protein resides in the secreted. In terms of biological role, neurotrophic factor that enhances survival and morphological differentiation of dopaminergic neurons and increases their high-affinity dopamine uptake. Acts by binding to its coreceptor, GFRA1, leading to autophosphorylation and activation of the RET receptor. In Danio rerio (Zebrafish), this protein is Glial cell line-derived neurotrophic factor.